Consider the following 97-residue polypeptide: uncharacterized protein (97 aa).

The disordered stretch occupies residues 27 to 50 (IGESEDKTNSRGQPATMKEDEVED).

This is an uncharacterized protein from Caldicellulosiruptor saccharolyticus (Caldocellum saccharolyticum).